A 691-amino-acid polypeptide reads, in one-letter code: Lectin-domain containing receptor kinase VI.4 (691 aa).

A signal peptide spans 1-19; it reads MGRAKSMVSLLLVLFLVRA. The Extracellular portion of the chain corresponds to 20–306; sequence HVATTETTTE…AKKRGYNGKV (287 aa). The legume-lectin like stretch occupies residues 26–273; the sequence is TTTEFIFHGF…AHYVMGWSFA (248 aa). A helical transmembrane segment spans residues 307 to 327; that stretch reads IALIVALSTVISIMLVLLFLF. The Cytoplasmic segment spans residues 328–691; that stretch reads MMYKKRMQQE…ISSTSLISGR (364 aa). The region spanning 363 to 641 is the Protein kinase domain; it reads FKENRVVGTG…LNRDEDVPEI (279 aa). ATP is bound by residues 369-377 and lysine 392; that span reads VGTGGFGIV. Residue aspartate 491 is the Proton acceptor of the active site.

It in the C-terminal section; belongs to the protein kinase superfamily. Ser/Thr protein kinase family. The protein in the N-terminal section; belongs to the leguminous lectin family.

The protein resides in the cell membrane. It catalyses the reaction L-seryl-[protein] + ATP = O-phospho-L-seryl-[protein] + ADP + H(+). The catalysed reaction is L-threonyl-[protein] + ATP = O-phospho-L-threonyl-[protein] + ADP + H(+). Its function is as follows. Involved in negative regulation of abscisic acid response in seed germination. The protein is Lectin-domain containing receptor kinase VI.4 (LECRK64) of Arabidopsis thaliana (Mouse-ear cress).